A 102-amino-acid polypeptide reads, in one-letter code: Noncompact myelin-associated protein (102 aa).

Residues 1–30 lie on the Extracellular side of the membrane; it reads MTTATPLGDTTFFSLNMTTRGEDFLYKSSG. Residues 31 to 51 form a helical membrane-spanning segment; the sequence is AIVAAVVVVVIIIFTVVLILL. At 52 to 102 the chain is on the cytoplasmic side; sequence KMYNRKMRTRRELEPKGPKPTAPSAVGPNSNGSQHPATVTFSPVDVQVETR. The disordered stretch occupies residues 60–102; sequence TRRELEPKGPKPTAPSAVGPNSNGSQHPATVTFSPVDVQVETR. A compositionally biased stretch (polar residues) spans 78 to 92; sequence GPNSNGSQHPATVTF.

Glycosylated.

It is found in the cell membrane. Plays a role in myelin formation. The protein is Noncompact myelin-associated protein (NCMAP) of Homo sapiens (Human).